We begin with the raw amino-acid sequence, 154 residues long: Small ribosomal subunit protein uS15 (154 aa).

A compositionally biased stretch (basic residues) spans 1–10; that stretch reads MARMHSRRRG. The segment at 1-32 is disordered; it reads MARMHSRRRGSSGSDRPTADEPPEWSEVDEDA. Residues 21–32 show a composition bias toward acidic residues; that stretch reads EPPEWSEVDEDA.

Belongs to the universal ribosomal protein uS15 family. In terms of assembly, part of the 30S ribosomal subunit.

The protein is Small ribosomal subunit protein uS15 of Natronomonas pharaonis (strain ATCC 35678 / DSM 2160 / CIP 103997 / JCM 8858 / NBRC 14720 / NCIMB 2260 / Gabara) (Halobacterium pharaonis).